We begin with the raw amino-acid sequence, 689 residues long: DNA ligase (689 aa).

NAD(+) is bound by residues 51-55, 100-101, and Glu-129; these read DSEYD and SL. The N6-AMP-lysine intermediate role is filled by Lys-131. 4 residues coordinate NAD(+): Arg-152, Glu-189, Lys-308, and Lys-332. Residues Cys-426, Cys-429, Cys-444, and Cys-450 each contribute to the Zn(2+) site. Residues 609–689 form the BRCT domain; the sequence is ADEQPLKGQT…ELLALLAANR (81 aa).

The protein belongs to the NAD-dependent DNA ligase family. LigA subfamily. Mg(2+) serves as cofactor. It depends on Mn(2+) as a cofactor.

It carries out the reaction NAD(+) + (deoxyribonucleotide)n-3'-hydroxyl + 5'-phospho-(deoxyribonucleotide)m = (deoxyribonucleotide)n+m + AMP + beta-nicotinamide D-nucleotide.. In terms of biological role, DNA ligase that catalyzes the formation of phosphodiester linkages between 5'-phosphoryl and 3'-hydroxyl groups in double-stranded DNA using NAD as a coenzyme and as the energy source for the reaction. It is essential for DNA replication and repair of damaged DNA. In Shewanella oneidensis (strain ATCC 700550 / JCM 31522 / CIP 106686 / LMG 19005 / NCIMB 14063 / MR-1), this protein is DNA ligase.